The sequence spans 256 residues: Tryptophan synthase alpha chain (256 aa).

Residues glutamate 44 and aspartate 55 each act as proton acceptor in the active site.

It belongs to the TrpA family. Tetramer of two alpha and two beta chains.

The enzyme catalyses (1S,2R)-1-C-(indol-3-yl)glycerol 3-phosphate + L-serine = D-glyceraldehyde 3-phosphate + L-tryptophan + H2O. It functions in the pathway amino-acid biosynthesis; L-tryptophan biosynthesis; L-tryptophan from chorismate: step 5/5. Functionally, the alpha subunit is responsible for the aldol cleavage of indoleglycerol phosphate to indole and glyceraldehyde 3-phosphate. The polypeptide is Tryptophan synthase alpha chain (Coxiella burnetii (strain CbuK_Q154) (Coxiella burnetii (strain Q154))).